Consider the following 186-residue polypeptide: Large ribosomal subunit protein uL10 (186 aa).

Part of the ribosomal stalk of the 50S ribosomal subunit. The N-terminus interacts with L11 and the large rRNA to form the base of the stalk. The C-terminus forms an elongated spine to which L12 dimers bind in a sequential fashion forming a multimeric L10(L12)X complex.

Its function is as follows. Forms part of the ribosomal stalk, playing a central role in the interaction of the ribosome with GTP-bound translation factors. In Rhodopseudomonas palustris (strain ATCC BAA-98 / CGA009), this protein is Large ribosomal subunit protein uL10.